Consider the following 729-residue polypeptide: MSCCDLAAAGQLGKAGIMASDCEPALNQAESRNPTLERYLGALREAKNDSEQFAALLLVTKAVKAGDIDAKTRRRIFDAVGFTFPNRLLTTKEAPDGCPDHVLRALGVALLACFCSDPELASHPQVLNKIPILCTFLTARGDPDDAARRSMIDDTYQCLTAVAGTPRGPRHLIAGGTVSALCQAYLGHGYGFDQALALLVGLLAAAETQCWKEAEPDLLAVLRGLSEDFQRAEDASKFELCQLLPLFLPPTTVPPECHRDLQAGLARILGSKLSSWQRNPALKLAARLAHACGSDWIPVGSSGSKFLALLVNLACVEVRLALEETGTEVKEDVVTACYALMELGIQECTRCEQSLLKEPQKVQLVSIMKEAIGAVIHYLLRVGPEKQKEPFVFASVRILGAWLAEETSSLRKEVCQLLPFLVRYAKTLYEEAEEASDISQQVANLAISPTTPGPAWPGDALRLLLPGWCHLTVEDGPREILIKEGAPSLLCKYFLQQWELTSPGHDTSVLPDSVEIGLQTCCHIFLNLVVTAPGLIKRDACFTSLMNTLMTSLPSLVQQQGRLLLAANVATLGLLMARLLSTSPALQGTPASRGFFAAAILFLSQSHVARATPGSDQAVLALSPDYEGIWADLQELWFLGMQAFTGCVPLLPWLAPAALRSRWPQELLQLLGSVSPNSVKPEMVAAYQGVLVELARANRLCREAMRLQAGEETASHYRMAALEQCLSEP.

The residue at position 2 (Ser-2) is an N-acetylserine. Residue Ser-2 is modified to Phosphoserine. 2 S-palmitoyl cysteine lipidation sites follow: Cys-3 and Cys-4. The residue at position 75 (Arg-75) is an Asymmetric dimethylarginine. A Phosphoserine modification is found at Ser-448.

This sequence belongs to the neurochondrin family. As to quaternary structure, interacts with MCHR1. Interacts with SEMA4C. Interacts with DIAPH1 (via FH3 domain). Interacts with GRM5. Palmitoylated. Palmitoylation by ZDHHC1, ZDHHC3 and ZDHHC11 regulates the association of NCDN with endosome membranes. May also be palmitoylated by ZDHHC7. As to expression, expressed in brain and in peripheral nervous system (at protein level). Weakly expressed in neurites.

The protein localises to the cytoplasm. Its subcellular location is the cytosol. The protein resides in the endosome membrane. It is found in the cell projection. It localises to the dendrite. The protein localises to the postsynapse. Its function is as follows. Probably involved in signal transduction, in the nervous system, via increasing cell surface localization of GRM5 and positively regulating its signaling. Required for the spatial learning process. Acts as a negative regulator of Ca(2+)-calmodulin-dependent protein kinase 2 (CaMK2) phosphorylation. May play a role in modulating melanin-concentrating hormone-mediated functions via its interaction with MCHR1 that interferes with G protein-coupled signal transduction. May be involved in bone metabolism. May also be involved in neurite outgrowth. This chain is Neurochondrin (Ncdn), found in Rattus norvegicus (Rat).